Reading from the N-terminus, the 439-residue chain is Glutamate--tRNA ligase 2 (439 aa).

Positions 9 to 19 (PSPTGHLHVGN) match the 'HIGH' region motif. The 'KMSKS' region signature appears at 233 to 237 (KLSKR). K236 lines the ATP pocket.

Belongs to the class-I aminoacyl-tRNA synthetase family. Glutamate--tRNA ligase type 1 subfamily. As to quaternary structure, monomer.

It is found in the cytoplasm. The catalysed reaction is tRNA(Glu) + L-glutamate + ATP = L-glutamyl-tRNA(Glu) + AMP + diphosphate. In terms of biological role, catalyzes the attachment of glutamate to tRNA(Glu) in a two-step reaction: glutamate is first activated by ATP to form Glu-AMP and then transferred to the acceptor end of tRNA(Glu). The protein is Glutamate--tRNA ligase 2 of Sphingopyxis alaskensis (strain DSM 13593 / LMG 18877 / RB2256) (Sphingomonas alaskensis).